The primary structure comprises 455 residues: Bifunctional protein GlmU (455 aa).

The tract at residues 1-226 is pyrophosphorylase; it reads MSLEIVILAA…AMEVQGANDR (226 aa). Residues 8 to 11, Lys-22, Gln-73, 78 to 79, 99 to 101, Gly-136, Glu-151, Asn-166, and Asn-224 each bind UDP-N-acetyl-alpha-D-glucosamine; these read LAAG, GT, and YGD. Asp-101 contacts Mg(2+). Asn-224 is a Mg(2+) binding site. Residues 227 to 247 are linker; that stretch reads KQLAELERHYQLRAGRRLMAQ. Residues 248–455 form an N-acetyltransferase region; it reads GVTLRDPARF…WKRPEKIKKD (208 aa). Residues Arg-330 and Lys-348 each contribute to the UDP-N-acetyl-alpha-D-glucosamine site. His-360 (proton acceptor) is an active-site residue. UDP-N-acetyl-alpha-D-glucosamine contacts are provided by Tyr-363 and Asn-374. Acetyl-CoA is bound by residues Ala-377, 383 to 384, Ser-402, Ala-420, and Arg-437; that span reads NY.

The protein in the N-terminal section; belongs to the N-acetylglucosamine-1-phosphate uridyltransferase family. In the C-terminal section; belongs to the transferase hexapeptide repeat family. Homotrimer. Mg(2+) serves as cofactor.

Its subcellular location is the cytoplasm. It catalyses the reaction alpha-D-glucosamine 1-phosphate + acetyl-CoA = N-acetyl-alpha-D-glucosamine 1-phosphate + CoA + H(+). The enzyme catalyses N-acetyl-alpha-D-glucosamine 1-phosphate + UTP + H(+) = UDP-N-acetyl-alpha-D-glucosamine + diphosphate. It participates in nucleotide-sugar biosynthesis; UDP-N-acetyl-alpha-D-glucosamine biosynthesis; N-acetyl-alpha-D-glucosamine 1-phosphate from alpha-D-glucosamine 6-phosphate (route II): step 2/2. It functions in the pathway nucleotide-sugar biosynthesis; UDP-N-acetyl-alpha-D-glucosamine biosynthesis; UDP-N-acetyl-alpha-D-glucosamine from N-acetyl-alpha-D-glucosamine 1-phosphate: step 1/1. The protein operates within bacterial outer membrane biogenesis; LPS lipid A biosynthesis. Catalyzes the last two sequential reactions in the de novo biosynthetic pathway for UDP-N-acetylglucosamine (UDP-GlcNAc). The C-terminal domain catalyzes the transfer of acetyl group from acetyl coenzyme A to glucosamine-1-phosphate (GlcN-1-P) to produce N-acetylglucosamine-1-phosphate (GlcNAc-1-P), which is converted into UDP-GlcNAc by the transfer of uridine 5-monophosphate (from uridine 5-triphosphate), a reaction catalyzed by the N-terminal domain. This chain is Bifunctional protein GlmU, found in Pseudomonas fluorescens (strain ATCC BAA-477 / NRRL B-23932 / Pf-5).